A 289-amino-acid chain; its full sequence is Shikimate dehydrogenase (NADP(+)) (289 aa).

Shikimate contacts are provided by residues 22–24 (SRS) and threonine 69. Lysine 73 acts as the Proton acceptor in catalysis. Residue glutamate 85 coordinates NADP(+). Asparagine 94 and aspartate 109 together coordinate shikimate. Residues 134 to 138 (GAGGA), 158 to 163 (NRTLSR), and isoleucine 226 contribute to the NADP(+) site. Tyrosine 228 is a shikimate binding site. Glycine 249 contributes to the NADP(+) binding site.

It belongs to the shikimate dehydrogenase family. In terms of assembly, homodimer.

It carries out the reaction shikimate + NADP(+) = 3-dehydroshikimate + NADPH + H(+). Its pathway is metabolic intermediate biosynthesis; chorismate biosynthesis; chorismate from D-erythrose 4-phosphate and phosphoenolpyruvate: step 4/7. Involved in the biosynthesis of the chorismate, which leads to the biosynthesis of aromatic amino acids. Catalyzes the reversible NADPH linked reduction of 3-dehydroshikimate (DHSA) to yield shikimate (SA). This chain is Shikimate dehydrogenase (NADP(+)), found in Brucella melitensis biotype 2 (strain ATCC 23457).